The chain runs to 502 residues: Aspartyl/glutamyl-tRNA(Asn/Gln) amidotransferase subunit B (502 aa).

The protein belongs to the GatB/GatE family. GatB subfamily. In terms of assembly, heterotrimer of A, B and C subunits.

It catalyses the reaction L-glutamyl-tRNA(Gln) + L-glutamine + ATP + H2O = L-glutaminyl-tRNA(Gln) + L-glutamate + ADP + phosphate + H(+). The catalysed reaction is L-aspartyl-tRNA(Asn) + L-glutamine + ATP + H2O = L-asparaginyl-tRNA(Asn) + L-glutamate + ADP + phosphate + 2 H(+). Its function is as follows. Allows the formation of correctly charged Asn-tRNA(Asn) or Gln-tRNA(Gln) through the transamidation of misacylated Asp-tRNA(Asn) or Glu-tRNA(Gln) in organisms which lack either or both of asparaginyl-tRNA or glutaminyl-tRNA synthetases. The reaction takes place in the presence of glutamine and ATP through an activated phospho-Asp-tRNA(Asn) or phospho-Glu-tRNA(Gln). The protein is Aspartyl/glutamyl-tRNA(Asn/Gln) amidotransferase subunit B of Pseudarthrobacter chlorophenolicus (strain ATCC 700700 / DSM 12829 / CIP 107037 / JCM 12360 / KCTC 9906 / NCIMB 13794 / A6) (Arthrobacter chlorophenolicus).